Consider the following 362-residue polypeptide: 3-dehydroquinate synthase (362 aa).

This sequence belongs to the archaeal-type DHQ synthase family.

It catalyses the reaction 2-amino-2,3,7-trideoxy-D-lyxo-hept-6-ulosonate + NAD(+) + H2O = 3-dehydroquinate + NH4(+) + NADH + H(+). Its function is as follows. Catalyzes the oxidative deamination and cyclization of 2-amino-3,7-dideoxy-D-threo-hept-6-ulosonic acid (ADH) to yield 3-dehydroquinate (DHQ), which is fed into the canonical shikimic pathway of aromatic amino acid biosynthesis. The sequence is that of 3-dehydroquinate synthase from Methanococcus aeolicus (strain ATCC BAA-1280 / DSM 17508 / OCM 812 / Nankai-3).